Reading from the N-terminus, the 212-residue chain is Amelotin (212 aa).

The N-terminal stretch at 1–16 is a signal peptide; it reads MKTVVLLLCLLGSAQS. Disordered stretches follow at residues 23–42 and 141–212; these read PALG…PLTQ and PSGQ…NRTK. Composition is skewed to polar residues over residues 33 to 42 and 165 to 178; these read TPGQVTPLTQ and PANQ…TTPA.

Belongs to the amelotin family. O-glycosylated. In terms of processing, phosphorylated by FAM20C in vitro. In terms of tissue distribution, highest expression in the mandible. Found in the basal lamina of maturation stage ameloblasts of incisors and unerupted molars. Also found in the internal basal lamina of junctional epithelium in molars.

The protein localises to the secreted. Functionally, is a promoter of calcium phosphate mineralization, playing a critical role in the formation of the compact, mineralized, aprismatic enamel surface layer during the maturation stage of amelogenesis. This Rattus norvegicus (Rat) protein is Amelotin.